Here is a 137-residue protein sequence, read N- to C-terminus: Small ribosomal subunit protein uS12 (137 aa).

The disordered stretch occupies residues 1-44; it reads MPTINQLVRKGRKSRTSKSDAPALNFGYNSMKKKATDNPAPQKR. Position 102 is a 3-methylthioaspartic acid (D102).

Belongs to the universal ribosomal protein uS12 family. In terms of assembly, part of the 30S ribosomal subunit. Contacts proteins S8 and S17. May interact with IF1 in the 30S initiation complex.

In terms of biological role, with S4 and S5 plays an important role in translational accuracy. Its function is as follows. Interacts with and stabilizes bases of the 16S rRNA that are involved in tRNA selection in the A site and with the mRNA backbone. Located at the interface of the 30S and 50S subunits, it traverses the body of the 30S subunit contacting proteins on the other side and probably holding the rRNA structure together. The combined cluster of proteins S8, S12 and S17 appears to hold together the shoulder and platform of the 30S subunit. The polypeptide is Small ribosomal subunit protein uS12 (Latilactobacillus sakei subsp. sakei (strain 23K) (Lactobacillus sakei subsp. sakei)).